The sequence spans 447 residues: UDP-N-acetyl-alpha-D-muramoyl-L-alanyl-L-glutamate epimerase (447 aa).

Belongs to the MurL family.

It catalyses the reaction UDP-N-acetyl-alpha-D-muramoyl-L-alanyl-L-glutamate + ATP + H2O = UDP-N-acetyl-alpha-D-muramoyl-L-alanyl-D-glutamate + AMP + diphosphate + H(+). It functions in the pathway cell wall biogenesis; peptidoglycan biosynthesis. Cell wall formation. Catalyzes epimerization of the terminal L-glutamate in UDP-N-acetyl-alpha-D-muramoyl-L-alanyl-L-glutamate. This Micromonospora sp. (strain ATCC 39149 / NRRL 15099 / SCC 1413) protein is UDP-N-acetyl-alpha-D-muramoyl-L-alanyl-L-glutamate epimerase.